The chain runs to 436 residues: Trigger factor (436 aa).

The region spanning 163 to 248 is the PPIase FKBP-type domain; it reads GDRVTVDFEG…VKKIEAAHLP (86 aa).

It belongs to the FKBP-type PPIase family. Tig subfamily.

It localises to the cytoplasm. The enzyme catalyses [protein]-peptidylproline (omega=180) = [protein]-peptidylproline (omega=0). Its function is as follows. Involved in protein export. Acts as a chaperone by maintaining the newly synthesized protein in an open conformation. Functions as a peptidyl-prolyl cis-trans isomerase. The polypeptide is Trigger factor (Acidovorax ebreus (strain TPSY) (Diaphorobacter sp. (strain TPSY))).